The primary structure comprises 230 residues: Acyl-protein thioesterase 1 (230 aa).

Catalysis depends on charge relay system residues serine 119, aspartate 174, and histidine 208. Lysine 224 carries the N6-acetyllysine modification.

Belongs to the AB hydrolase superfamily. AB hydrolase 2 family. Homodimer.

The protein localises to the cytoplasm. It is found in the cell membrane. It localises to the nucleus membrane. Its subcellular location is the endoplasmic reticulum. It carries out the reaction S-hexadecanoyl-L-cysteinyl-[protein] + H2O = L-cysteinyl-[protein] + hexadecanoate + H(+). The catalysed reaction is 1-hexadecanoyl-sn-glycero-3-phosphocholine + H2O = sn-glycerol 3-phosphocholine + hexadecanoate + H(+). The enzyme catalyses a 1-(9Z-octadecenoyl)-2-acyl-sn-glycero-3-phosphocholine + H2O = a 2-acyl-sn-glycero-3-phosphocholine + (9Z)-octadecenoate + H(+). Acts as an acyl-protein thioesterase. Hydrolyzes fatty acids from S-acylated cysteine residues in proteins such as trimeric G alpha proteins or HRAS. Acts as a palmitoyl thioesterase that catalyzes depalmitoylation of proteins, such as ADRB2, KCNMA1 and SQSTM1. Acts as a negative regulator of autophagy by mediating palmitoylation of SQSTM1, decreasing affinity between SQSTM1 and ATG8 proteins and recruitment of ubiquitinated cargo proteins to autophagosomes. Acts as a lysophospholipase and hydrolyzes lysophosphatidylcholine (lyso-PC). Also hydrolyzes lysophosphatidylethanolamine (lyso-PE), lysophosphatidylinositol (lyso-PI) and lysophosphatidylserine (lyso-PS). Has much higher thioesterase activity than lysophospholipase activity. Contributes to the production of lysophosphatidic acid (LPA) during blood coagulation by recognizing and cleaving plasma phospholipids to generate lysophospholipids which in turn act as substrates for ENPP2 to produce LPA. This is Acyl-protein thioesterase 1 (Lypla1) from Mus musculus (Mouse).